The following is a 549-amino-acid chain: Glucose-6-phosphate isomerase (549 aa).

3 positions are modified to N6-acetyllysine: lysine 80, lysine 228, and lysine 234. Residue glutamate 355 is the Proton donor of the active site. Active-site residues include histidine 386 and lysine 514.

It belongs to the GPI family.

Its subcellular location is the cytoplasm. The catalysed reaction is alpha-D-glucose 6-phosphate = beta-D-fructose 6-phosphate. It participates in carbohydrate biosynthesis; gluconeogenesis. Its pathway is carbohydrate degradation; glycolysis; D-glyceraldehyde 3-phosphate and glycerone phosphate from D-glucose: step 2/4. In terms of biological role, catalyzes the reversible isomerization of glucose-6-phosphate to fructose-6-phosphate. The sequence is that of Glucose-6-phosphate isomerase from Escherichia coli O17:K52:H18 (strain UMN026 / ExPEC).